Consider the following 143-residue polypeptide: MFDFDATLPLMALQFVVLAFLLNAIFYKPMNKVLDERADYIRTNEEDARERLAKAKAITQEYEQQITDARRQSQAVIADAQAEARRLAAEKIAEAQRESQRQKETAAQEIEAQRQSALSSLEQEVAALSNQILHKLLGPELIK.

A helical transmembrane segment spans residues 6–26 (ATLPLMALQFVVLAFLLNAIF).

The protein belongs to the ATPase B chain family. As to quaternary structure, F-type ATPases have 2 components, F(1) - the catalytic core - and F(0) - the membrane proton channel. F(1) has five subunits: alpha(3), beta(3), gamma(1), delta(1), epsilon(1). F(0) has four main subunits: a(1), b(1), b'(1) and c(10-14). The alpha and beta chains form an alternating ring which encloses part of the gamma chain. F(1) is attached to F(0) by a central stalk formed by the gamma and epsilon chains, while a peripheral stalk is formed by the delta, b and b' chains.

It is found in the cellular thylakoid membrane. In terms of biological role, f(1)F(0) ATP synthase produces ATP from ADP in the presence of a proton or sodium gradient. F-type ATPases consist of two structural domains, F(1) containing the extramembraneous catalytic core and F(0) containing the membrane proton channel, linked together by a central stalk and a peripheral stalk. During catalysis, ATP synthesis in the catalytic domain of F(1) is coupled via a rotary mechanism of the central stalk subunits to proton translocation. Component of the F(0) channel, it forms part of the peripheral stalk, linking F(1) to F(0). The b'-subunit is a diverged and duplicated form of b found in plants and photosynthetic bacteria. In Synechocystis sp. (strain ATCC 27184 / PCC 6803 / Kazusa), this protein is ATP synthase subunit b'.